A 969-amino-acid chain; its full sequence is Chromosome transmission fidelity protein 18 homolog (969 aa).

Residues 30-97 form a disordered region; the sequence is EGTRDQAPPG…APSSPMVKRP (68 aa). Thr-51 is subject to Phosphothreonine. At Ser-221 the chain carries Phosphoserine. Disordered regions lie at residues 250–269 and 318–340; these read SEGEEAVLEGPPAEEPAPGQ and RKPRPGVETTRVGKEATAPGKWK. Positions 257–268 are enriched in low complexity; sequence LEGPPAEEPAPG. 369–376 contributes to the ATP binding site; it reads GPPGLGKT. The disordered stretch occupies residues 856 to 889; sequence ARSGPQVDQGSSGPASLWTDSGEKGTRQPAPRNH. Over residues 876 to 889 the composition is skewed to basic and acidic residues; that stretch reads SGEKGTRQPAPRNH.

This sequence belongs to the activator 1 small subunits family. CTF18 subfamily. As to quaternary structure, component of the CTF18-RFC complex, which consists of CTF18, CTF8, DCC1, RFC2, RFC3, RFC4 and RFC5. During assembly of the CTF18-RFC complex, CTF18 may first assemble into a subcomplex with RFC2, RFC3, RFC4 and RFC5. CTF18 then interacts directly with CTF8, which in turn interacts with DCC1. The CTF18-RFC complex associates with PCNA and with DNA polymerase POLH. The CTF18-RFC complex does not interact with the Rad9/Rad1/Hus1 complex. CTF18 interacts with SMC1A and RAD21. Interacts with DDX11.

It is found in the nucleus. In terms of biological role, chromosome cohesion factor involved in sister chromatid cohesion and fidelity of chromosome transmission. Component of one of the cell nuclear antigen loader complexes, CTF18-replication factor C (CTF18-RFC), which consists of CTF18, CTF8, DCC1, RFC2, RFC3, RFC4 and RFC5. The CTF18-RFC complex binds to single-stranded and primed DNAs and has weak ATPase activity that is stimulated by the presence of primed DNA, replication protein A (RPA) and by proliferating cell nuclear antigen (PCNA). The CTF18-RFC complex catalyzes the ATP-dependent loading of PCNA onto primed and gapped DNA. Interacts with and stimulates DNA polymerase POLH. During DNA repair synthesis, involved in loading DNA polymerase POLE at the sites of local damage. The protein is Chromosome transmission fidelity protein 18 homolog (Chtf18) of Mus musculus (Mouse).